We begin with the raw amino-acid sequence, 105 residues long: Large ribosomal subunit protein uL24 (105 aa).

Belongs to the universal ribosomal protein uL24 family. Part of the 50S ribosomal subunit.

Functionally, one of two assembly initiator proteins, it binds directly to the 5'-end of the 23S rRNA, where it nucleates assembly of the 50S subunit. Its function is as follows. One of the proteins that surrounds the polypeptide exit tunnel on the outside of the subunit. This Rhizorhabdus wittichii (strain DSM 6014 / CCUG 31198 / JCM 15750 / NBRC 105917 / EY 4224 / RW1) (Sphingomonas wittichii) protein is Large ribosomal subunit protein uL24.